The primary structure comprises 468 residues: UDP-glucosyl transferase 74CD1 (468 aa).

Gly20 contacts UDP-alpha-D-glucose. His21 functions as the Proton acceptor in the catalytic mechanism. The active-site Charge relay is Asp114. Residues Ser292, Trp344, Gln347, His362, Trp365, Asn366, Ser367, Glu370, Asp386, and Gln387 each contribute to the UDP-alpha-D-glucose site.

Belongs to the UDP-glycosyltransferase family. As to expression, mainly expressed in flowers, flower buds and young leaves, and, to a lesser extent, in old leaves, stems and roots.

Its pathway is secondary metabolite biosynthesis; terpenoid biosynthesis. In terms of biological role, component of the oleanane-type triterpene saponins (e.g. saponarioside A and saponarioside B) biosynthetic pathway, leading to the production of natural products with detergent properties used as traditional sources of soap. A glycosyltransferase that, together with SDR1, mediates the conversion of QA-tri to QA-triF; UGT74CD1 may transfer 4-keto-6-deoxy-glucose to QA-tri, which is in turn reduced to D-fucose by SDR1, thus leading to QA-triF formation via the initiation of the C-28 sugar chain. This is UDP-glucosyl transferase 74CD1 from Saponaria officinalis (Common soapwort).